The following is a 275-amino-acid chain: Large ribosomal subunit protein uL2 (275 aa).

Disordered stretches follow at residues 35-55 (EKQT…RHKG) and 223-260 (VAMN…KTRN). The segment covering 39 to 49 (RSSGRNNQGRV) has biased composition (polar residues).

It belongs to the universal ribosomal protein uL2 family. In terms of assembly, part of the 50S ribosomal subunit. Forms a bridge to the 30S subunit in the 70S ribosome.

Its function is as follows. One of the primary rRNA binding proteins. Required for association of the 30S and 50S subunits to form the 70S ribosome, for tRNA binding and peptide bond formation. It has been suggested to have peptidyltransferase activity; this is somewhat controversial. Makes several contacts with the 16S rRNA in the 70S ribosome. This Methylococcus capsulatus (strain ATCC 33009 / NCIMB 11132 / Bath) protein is Large ribosomal subunit protein uL2.